The sequence spans 251 residues: Probable transcriptional regulatory protein Mflv_3828 (251 aa).

This sequence belongs to the TACO1 family.

The protein resides in the cytoplasm. The protein is Probable transcriptional regulatory protein Mflv_3828 of Mycolicibacterium gilvum (strain PYR-GCK) (Mycobacterium gilvum (strain PYR-GCK)).